Here is a 171-residue protein sequence, read N- to C-terminus: Transcription factor E (171 aa).

Residues 5-88 enclose the HTH TFE/IIEalpha-type domain; the sequence is YEDPFIRIAV…RWRSRREEVE (84 aa).

It belongs to the TFE family. In terms of assembly, monomer. Interaction with RNA polymerase subunits RpoF and RpoE is necessary for Tfe stimulatory transcription activity. Able to interact with Tbp and RNA polymerase in the absence of DNA promoter. Interacts both with the preinitiation and elongation complexes.

Transcription factor that plays a role in the activation of archaeal genes transcribed by RNA polymerase. Facilitates transcription initiation by enhancing TATA-box recognition by TATA-box-binding protein (Tbp), and transcription factor B (Tfb) and RNA polymerase recruitment. Not absolutely required for transcription in vitro, but particularly important in cases where Tbp or Tfb function is not optimal. It dynamically alters the nucleic acid-binding properties of RNA polymerases by stabilizing the initiation complex and destabilizing elongation complexes. Seems to translocate with the RNA polymerase following initiation and acts by binding to the non template strand of the transcription bubble in elongation complexes. This chain is Transcription factor E, found in Cenarchaeum symbiosum (strain A).